We begin with the raw amino-acid sequence, 469 residues long: Protein RUFY3 (469 aa).

Residues threonine 5 and threonine 12 each carry the phosphothreonine modification. Phosphoserine occurs at positions 34 and 49. At threonine 51 the chain carries Phosphothreonine. The region spanning 95–227 (DSDYAPLQQF…IDANFCMKGE (133 aa)) is the RUN domain. Coiled coils occupy residues 271–362 (NRHL…VEKE) and 422–463 (KSEL…AANK).

As to quaternary structure, interacts with PAK1. Interacts (via C-terminus) with Ras-related Rab-5 proteins. Interacts (via C-terminus) with Ras-related Rap-2 proteins. Interacts with PIK3CA and PIK3R1. Interacts (via N-terminus) with FSCN1; this interaction induces neuron axon development. Interacts with DBN1. Interacts (via the second coiled coil) with GTP-, but not GDP-bound ARL8A and ARL8B. Interacts with dynactin/DCTN1 and the dynein intermediate chain DYNC1I1/2. Directly interacts with DYNC1LI1. Post-translationally, isoform 1 is partially phosphorylated. Phosphorylated by PAK1. In terms of tissue distribution, expressed in brain (at protein level).

Its subcellular location is the cytoplasm. The protein resides in the endomembrane system. It localises to the cell projection. It is found in the invadopodium. The protein localises to the growth cone. Its subcellular location is the perikaryon. The protein resides in the filopodium. It localises to the lamellipodium. It is found in the lysosome. Its function is as follows. ARL8 effector that promotes the coupling of endolysosomes to dynein-dynactin for retrograde transport along microtubules. Acts by binding both GTP-bound ARL8 and dynein-dynactin. In nonneuronal cells, promotes concentration of endolysosomes in the juxtanuclear area. In hippocampal neurons, drives retrograde transport of endolysosomes from the axon to the soma. Plays a role in the generation of neuronal polarity formation and axon growth. Implicated in the formation of a single axon by developing neurons. May inhibit the formation of additional axons by inhibition of PI3K in minor neuronal processes. Plays a role in the formation of F-actin-enriched protrusive structures at the cell periphery. Plays a role in cytoskeletal organization by regulating the subcellular localization of FSCN1 and DBN1 at axonal growth cones. This Rattus norvegicus (Rat) protein is Protein RUFY3.